A 123-amino-acid polypeptide reads, in one-letter code: Ribosome-binding factor A (123 aa).

Belongs to the RbfA family. In terms of assembly, monomer. Binds 30S ribosomal subunits, but not 50S ribosomal subunits or 70S ribosomes.

Its subcellular location is the cytoplasm. One of several proteins that assist in the late maturation steps of the functional core of the 30S ribosomal subunit. Associates with free 30S ribosomal subunits (but not with 30S subunits that are part of 70S ribosomes or polysomes). Required for efficient processing of 16S rRNA. May interact with the 5'-terminal helix region of 16S rRNA. This Neisseria gonorrhoeae (strain NCCP11945) protein is Ribosome-binding factor A.